A 339-amino-acid chain; its full sequence is Ferrochelatase (339 aa).

Fe cation contacts are provided by His-202 and Glu-283.

Belongs to the ferrochelatase family.

The protein localises to the cytoplasm. It catalyses the reaction heme b + 2 H(+) = protoporphyrin IX + Fe(2+). Its pathway is porphyrin-containing compound metabolism; protoheme biosynthesis; protoheme from protoporphyrin-IX: step 1/1. In terms of biological role, catalyzes the ferrous insertion into protoporphyrin IX. This chain is Ferrochelatase, found in Psychrobacter arcticus (strain DSM 17307 / VKM B-2377 / 273-4).